Consider the following 306-residue polypeptide: Phosphoadenosine phosphosulfate reductase (306 aa).

Disordered stretches follow at residues 1–30 (MPAKMHSNYPSDSETAELRDSTESGYVSGG) and 245–266 (YHSTSPVKENEDERSGRWKGQA).

The protein belongs to the PAPS reductase family. CysH subfamily.

It catalyses the reaction [thioredoxin]-disulfide + sulfite + adenosine 3',5'-bisphosphate + 2 H(+) = [thioredoxin]-dithiol + 3'-phosphoadenylyl sulfate. The protein operates within sulfur metabolism; hydrogen sulfide biosynthesis; sulfite from sulfate: step 3/3. In terms of biological role, the NADP dependent reduction of PAPS into sulfite involves thioredoxin which probably plays the role of a thiol carrier. This Emericella nidulans (strain FGSC A4 / ATCC 38163 / CBS 112.46 / NRRL 194 / M139) (Aspergillus nidulans) protein is Phosphoadenosine phosphosulfate reductase (sA).